The sequence spans 302 residues: Galactofuranosyltransferase GlfT1 (302 aa).

This sequence belongs to the glycosyltransferase 2 family.

The protein resides in the cell membrane. The protein localises to the secreted. It localises to the cell wall. It carries out the reaction alpha-L-rhamnosyl-(1-&gt;3)-N-acetyl-alpha-D-glucosaminyl-diphospho-trans,octa-cis-decaprenol + 2 UDP-alpha-D-galactofuranose = beta-D-galactofuranosyl-(1-&gt;5)-beta-D-galactofuranosyl-(1-&gt;4)-alpha-L-rhamnosyl-(1-&gt;3)-N-acetyl-alpha-D-glucosaminyl-diphospho-trans,octa-cis-decaprenol + 2 UDP + 2 H(+). The protein operates within cell wall biogenesis; cell wall polysaccharide biosynthesis. Functionally, involved in the biosynthesis of the arabinogalactan (AG) region of the mycolylarabinogalactan-peptidoglycan (mAGP) complex, an essential component of the mycobacterial cell wall. Catalyzes the transfer of the first two galactofuranosyl (Galf) units from UDP-galactofuranose (UDP-Galf) onto the rhamnosyl-GlcNAc-diphospho-decaprenol (Rha-GlcNAc-PP-C50) acceptor, yielding galactofuranosyl-galactofuranosyl-rhamnosyl-GlcNAc-diphospho-decaprenol (Galf-Galf-Rha-GlcNAc-PP-C50). Thus, GlfT1 is the initiator of galactan synthesis, while GlfT2 continues with the subsequent polymerization events. The protein is Galactofuranosyltransferase GlfT1 of Mycolicibacterium smegmatis (strain ATCC 700084 / mc(2)155) (Mycobacterium smegmatis).